The primary structure comprises 200 residues: LexA repressor (200 aa).

The H-T-H motif DNA-binding region spans 28 to 48 (RAEIARILGFKSANAAEEHIK). Residues serine 118 and lysine 155 each act as for autocatalytic cleavage activity in the active site.

This sequence belongs to the peptidase S24 family. As to quaternary structure, homodimer.

The catalysed reaction is Hydrolysis of Ala-|-Gly bond in repressor LexA.. Its function is as follows. Represses a number of genes involved in the response to DNA damage (SOS response), including recA and lexA. In the presence of single-stranded DNA, RecA interacts with LexA causing an autocatalytic cleavage which disrupts the DNA-binding part of LexA, leading to derepression of the SOS regulon and eventually DNA repair. This Cellvibrio japonicus (strain Ueda107) (Pseudomonas fluorescens subsp. cellulosa) protein is LexA repressor.